A 391-amino-acid chain; its full sequence is Elongation factor Tu (391 aa).

Residues 10 to 201 (KPHVNIGTVG…AVDEYIPTPE (192 aa)) enclose the tr-type G domain. The tract at residues 19–26 (GHVDHGKT) is G1. 19-26 (GHVDHGKT) is a GTP binding site. Thr26 serves as a coordination point for Mg(2+). The tract at residues 55–59 (GITIS) is G2. The interval 76-79 (DCPG) is G3. GTP is bound by residues 76–80 (DCPGH) and 131–134 (NKVD). Residues 131 to 134 (NKVD) form a G4 region. The tract at residues 169–171 (SAL) is G5.

The protein belongs to the TRAFAC class translation factor GTPase superfamily. Classic translation factor GTPase family. EF-Tu/EF-1A subfamily. As to quaternary structure, monomer.

The protein localises to the cytoplasm. The enzyme catalyses GTP + H2O = GDP + phosphate + H(+). Its function is as follows. GTP hydrolase that promotes the GTP-dependent binding of aminoacyl-tRNA to the A-site of ribosomes during protein biosynthesis. The chain is Elongation factor Tu from Ruegeria sp. (strain TM1040) (Silicibacter sp.).